The sequence spans 344 residues: Dihydroorotase (344 aa).

Positions 14 and 16 each coordinate Zn(2+). Residues 16–18 (HFR) and asparagine 42 each bind substrate. Lysine 100, histidine 137, and histidine 175 together coordinate Zn(2+). N6-carboxylysine is present on lysine 100. A substrate-binding site is contributed by histidine 137. Position 220 (leucine 220) interacts with substrate. Position 248 (aspartate 248) interacts with Zn(2+). Residue aspartate 248 is part of the active site. Residues histidine 252 and alanine 264 each coordinate substrate.

This sequence belongs to the metallo-dependent hydrolases superfamily. DHOase family. Class II DHOase subfamily. Homodimer. It depends on Zn(2+) as a cofactor.

The enzyme catalyses (S)-dihydroorotate + H2O = N-carbamoyl-L-aspartate + H(+). It functions in the pathway pyrimidine metabolism; UMP biosynthesis via de novo pathway; (S)-dihydroorotate from bicarbonate: step 3/3. In terms of biological role, catalyzes the reversible cyclization of carbamoyl aspartate to dihydroorotate. This is Dihydroorotase from Alcanivorax borkumensis (strain ATCC 700651 / DSM 11573 / NCIMB 13689 / SK2).